Here is a 275-residue protein sequence, read N- to C-terminus: Apoptosis inhibitor 1 (275 aa).

2 BIR repeats span residues 24–91 and 126–193; these read LIER…CVYA and PSAR…CYFV. 4 residues coordinate Zn(2+): Cys-163, Cys-166, His-183, and Cys-190. The RING-type zinc finger occupies 227–263; the sequence is CKVCLERQRDAVLLPCRHFCVCMQCYFALDGKCPTCR.

Functionally, acts by blocking cellular apoptosis rather than by preventing viral stimulation of apoptosis. The sequence is that of Apoptosis inhibitor 1 (IAP1) from Orgyia pseudotsugata (Douglas-fir tussock moth).